A 125-amino-acid polypeptide reads, in one-letter code: Large ribosomal subunit protein bL19 (125 aa).

It belongs to the bacterial ribosomal protein bL19 family.

This protein is located at the 30S-50S ribosomal subunit interface and may play a role in the structure and function of the aminoacyl-tRNA binding site. This is Large ribosomal subunit protein bL19 from Wolbachia pipientis wMel.